Here is a 168-residue protein sequence, read N- to C-terminus: Transcription antitermination protein NusB (168 aa).

Belongs to the NusB family.

In terms of biological role, involved in transcription antitermination. Required for transcription of ribosomal RNA (rRNA) genes. Binds specifically to the boxA antiterminator sequence of the ribosomal RNA (rrn) operons. The polypeptide is Transcription antitermination protein NusB (Deinococcus deserti (strain DSM 17065 / CIP 109153 / LMG 22923 / VCD115)).